The primary structure comprises 231 residues: Very-long-chain (3R)-3-hydroxyacyl-CoA dehydratase 4 (231 aa).

Topologically, residues 1 to 19 are cytoplasmic; the sequence is MGPVALPTWLQPRYRKNAY. A helical transmembrane segment spans residues 20–40; the sequence is LFIYYLIQFCGHSWIFTNMTV. The Lumenal portion of the chain corresponds to 41-56; sequence RFFSFGKDSMVDTFYA. The helical transmembrane segment at 57–77 threads the bilayer; sequence IGLVMQLCQSISLLELLHIYV. Residues 78 to 112 are Cytoplasmic-facing; it reads GIESNHLLPRILQLTERIIVLFMVITSQEEVQEKY. A helical transmembrane segment spans residues 113–133; it reads VVCVLFIFRNLLDMVRYTYSM. At 134 to 135 the chain is on the lumenal side; the sequence is LS. Residues 136-156 traverse the membrane as a helical segment; that stretch reads VIGISYAVLTWFSQTLWMPIY. Residue Y156 is part of the active site. Residue P157 is a topological domain, cytoplasmic. Residues 158-178 traverse the membrane as a helical segment; it reads LCVLAEAFTIYQSLPYFESFG. E163 is an active-site residue. Topologically, residues 179-189 are lumenal; it reads TYSTKLPFDLS. A helical transmembrane segment spans residues 190-210; the sequence is FYFPYVLKIYLMMLFVGMYFT. The Cytoplasmic segment spans residues 211-231; it reads YNHLYSERRDILRVFPNKKKM.

The protein belongs to the very long-chain fatty acids dehydratase HACD family. May interact with enzymes of the ELO family (including ELOVL1); with those enzymes that mediate condensation, the first of the four steps of the reaction cycle responsible for fatty acids elongation, may be part of a larger fatty acids elongase complex.

The protein resides in the endoplasmic reticulum membrane. The catalysed reaction is a very-long-chain (3R)-3-hydroxyacyl-CoA = a very-long-chain (2E)-enoyl-CoA + H2O. It catalyses the reaction (3R)-hydroxyhexadecanoyl-CoA = (2E)-hexadecenoyl-CoA + H2O. Its pathway is lipid metabolism; fatty acid biosynthesis. Functionally, catalyzes the third of the four reactions of the long-chain fatty acids elongation cycle. This endoplasmic reticulum-bound enzymatic process, allows the addition of two carbons to the chain of long- and very long-chain fatty acids/VLCFAs per cycle. This enzyme catalyzes the dehydration of the 3-hydroxyacyl-CoA intermediate into trans-2,3-enoyl-CoA, within each cycle of fatty acid elongation. Thereby, it participates in the production of VLCFAs of different chain lengths that are involved in multiple biological processes as precursors of membrane lipids and lipid mediators. This is Very-long-chain (3R)-3-hydroxyacyl-CoA dehydratase 4 from Bos taurus (Bovine).